The sequence spans 224 residues: Ribonuclease 3 (224 aa).

Positions 4–127 constitute an RNase III domain; sequence IEKLERSLTY…IIGAIHLEAG (124 aa). Glu40 contributes to the Mg(2+) binding site. Residue Asp44 is part of the active site. Mg(2+) contacts are provided by Asp113 and Glu116. The active site involves Glu116. Residues 154–223 enclose the DRBM domain; the sequence is DYKTKLQEIT…AKIALEKLGA (70 aa).

This sequence belongs to the ribonuclease III family. Homodimer. It depends on Mg(2+) as a cofactor.

The protein resides in the cytoplasm. The enzyme catalyses Endonucleolytic cleavage to 5'-phosphomonoester.. Functionally, digests double-stranded RNA. Involved in the processing of primary rRNA transcript to yield the immediate precursors to the large and small rRNAs (23S and 16S). Processes some mRNAs, and tRNAs when they are encoded in the rRNA operon. Processes pre-crRNA and tracrRNA of type II CRISPR loci if present in the organism. This Campylobacter jejuni (strain RM1221) protein is Ribonuclease 3.